Reading from the N-terminus, the 180-residue chain is Putative adenylate kinase (180 aa).

The ATP site is built by Gly10, Gly12, Lys13, Thr14, and Thr15. Positions 30–50 (SVKELALSRGIGERVSDEIEI) are NMP. Residues 99–109 (ARGYSKKKLAE) form an LID region. ATP-binding residues include Arg100 and Lys138.

Belongs to the adenylate kinase family. AK6 subfamily. In terms of assembly, interacts with uS11. Not a structural component of 40S pre-ribosomes, but transiently interacts with them by binding to uS11.

It carries out the reaction AMP + ATP = 2 ADP. The catalysed reaction is ATP + H2O = ADP + phosphate + H(+). In terms of biological role, broad-specificity nucleoside monophosphate (NMP) kinase that catalyzes the reversible transfer of the terminal phosphate group between nucleoside triphosphates and monophosphates. Also has ATPase activity. Involved in the late maturation steps of the 30S ribosomal particles, specifically 16S rRNA maturation. While NMP activity is not required for ribosome maturation, ATPase activity is. Associates transiently with small ribosomal subunit protein uS11. ATP hydrolysis breaks the interaction with uS11. May temporarily remove uS11 from the ribosome to enable a conformational change of the ribosomal RNA that is needed for the final maturation step of the small ribosomal subunit. The sequence is that of Putative adenylate kinase from Thermococcus onnurineus (strain NA1).